The following is a 1067-amino-acid chain: Cadmium/zinc-transporting ATPase HMA2 (1067 aa).

Residues 9 to 75 (QKSYFDVLGI…ALNQARLEAS (67 aa)) form the HMA domain. The next 8 helical transmembrane spans lie at 94–114 (YVLLCGLLLVVSLFEHFWHPL), 117–137 (FALVAAAAGLPPIVLRSIAAI), 140–160 (LTLDVNILMLIAVAGAIALKD), 162–182 (SEAGFIVFLFTTAEWLETRAS), 313–333 (YTPAVVVMAGSVAAIPAIAKA), 342–362 (LALVLLVSACPCALVLSTPIA), 649–669 (IIVNIIFSVITKLAIVGLAFA), and 673–693 (LIWAAVLADVGTCLLVIMYSM). Disordered regions lie at residues 711–739 (HHGSPKKCCSSSHHGSHAKKNHGVSHHCS), 760–790 (HDHHHEHNHHEEPAHKHSSNQHGCHDHSHGH), and 960–996 (NDTHPVQEHSISIEESSDHHEHHHNEEHKAEDCGHHP). A compositionally biased stretch (basic residues) spans 724 to 735 (HGSHAKKNHGVS). Basic and acidic residues-rich tracts occupy residues 760 to 774 (HDHHHEHNHHEEPAH) and 975 to 996 (SSDHHEHHHNEEHKAEDCGHHP).

The protein belongs to the cation transport ATPase (P-type) (TC 3.A.3) family. Type IB subfamily. In roots, localizes at the pericycle cells. In nodes, localizes in the phloem parenchyma and companion cells of both enlarged and diffuse vascular bundles.

It is found in the cell membrane. The enzyme catalyses Zn(2+)(in) + ATP + H2O = Zn(2+)(out) + ADP + phosphate + H(+). It carries out the reaction Cd(2+)(in) + ATP + H2O = Cd(2+)(out) + ADP + phosphate + H(+). Zinc/cadmium transporter that plays an essential role in promoting translocation of zinc and cadmium from roots to shoots. May control cadmium loading into xylem. In roots, transports zinc and cadmium from the apoplast to the symplast to facilitate translocation via the phloem. In nodes, functions to load zinc and cadmium to the phloem for the preferential distribution to the upper nodes and panicles. The polypeptide is Cadmium/zinc-transporting ATPase HMA2 (Oryza sativa subsp. japonica (Rice)).